Here is a 495-residue protein sequence, read N- to C-terminus: UDP-N-acetylmuramate--L-alanine ligase (495 aa).

153–159 (GTHGKTT) lines the ATP pocket.

This sequence belongs to the MurCDEF family.

The protein resides in the cytoplasm. The catalysed reaction is UDP-N-acetyl-alpha-D-muramate + L-alanine + ATP = UDP-N-acetyl-alpha-D-muramoyl-L-alanine + ADP + phosphate + H(+). The protein operates within cell wall biogenesis; peptidoglycan biosynthesis. Functionally, cell wall formation. The chain is UDP-N-acetylmuramate--L-alanine ligase from Gloeothece citriformis (strain PCC 7424) (Cyanothece sp. (strain PCC 7424)).